A 412-amino-acid chain; its full sequence is Early growth response protein 2b (412 aa).

Positions 269–299 (YTPQNLPLRPILRPRKYPNRPSKTPVHERPY) are disordered. 3 consecutive C2H2-type zinc fingers follow at residues 299–323 (YPCP…IRIH), 329–351 (FQCR…IRTH), and 357–379 (FACD…TKIH). A disordered region spans residues 371–412 (ERKRHTKIHLRQKERKSSSSSTGVSSSERGVATSICSSSSNQ). Positions 374 to 384 (RHTKIHLRQKE) are enriched in basic residues. The segment covering 388-401 (SSSSTGVSSSERGV) has biased composition (low complexity).

This sequence belongs to the EGR C2H2-type zinc-finger protein family.

The protein resides in the nucleus. Functionally, sequence-specific DNA-binding transcription factor. Binds to two specific DNA sites located in the promoter region of HOXA4. This chain is Early growth response protein 2b (egr2b), found in Danio rerio (Zebrafish).